The following is a 245-amino-acid chain: MKVDLNADLGEGCANDQALLQLVSSANIACGFHAGDAQTMRQSVRWAIEYGVAIGAHPSFPDRENFGRTAMQLPPETVYAQVVYQLGALAAIVKAEGGIMQHVKPHGMLYNQAALDPLLADAIAQAVKAVDPILRLVGLAGSELIRAGERAGLVTRQEVFADRRYQSDGTLVPRSQPDALIESDDLALSQTLAMVQRHQVQARDGSWVPVQADTVCVHGDGAHALNFARRLRDSFQQENITVTAQ.

The protein belongs to the LamB/PxpA family. Forms a complex composed of PxpA, PxpB and PxpC.

It catalyses the reaction 5-oxo-L-proline + ATP + 2 H2O = L-glutamate + ADP + phosphate + H(+). Its function is as follows. Catalyzes the cleavage of 5-oxoproline to form L-glutamate coupled to the hydrolysis of ATP to ADP and inorganic phosphate. This chain is 5-oxoprolinase subunit A, found in Yersinia enterocolitica serotype O:8 / biotype 1B (strain NCTC 13174 / 8081).